Consider the following 507-residue polypeptide: DNA nucleotidylexotransferase (507 aa).

The Nuclear localization signal signature appears at 11–17 (PLRKKAK). In terms of domain architecture, BRCT spans 27-124 (QHNVKFKEIV…RPVEIQNRHL (98 aa)). An involved in DNA binding region spans residues 254-258 (VGLKT). Residues 329-334 (GFRRGK) and 338-341 (HDVD) each bind a 2'-deoxyribonucleoside 5'-triphosphate. The Mg(2+) site is built by Asp339, Asp341, and Asp431. 446–447 (GW) is an a 2'-deoxyribonucleoside 5'-triphosphate binding site.

It belongs to the DNA polymerase type-X family. Requires Mg(2+) as cofactor. As to expression, found in the thymus and not in the spleen, kidney, intestine, or liver.

The protein resides in the nucleus. The catalysed reaction is DNA(n) + a 2'-deoxyribonucleoside 5'-triphosphate = DNA(n+1) + diphosphate. Functionally, template-independent DNA polymerase which catalyzes the random addition of deoxynucleoside 5'-triphosphate to the 3'-end of a DNA initiator. One of the in vivo functions of this enzyme is the addition of nucleotides at the junction (N region) of rearranged Ig heavy chain and T-cell receptor gene segments during the maturation of B- and T-cells. The protein is DNA nucleotidylexotransferase (dntt) of Xenopus laevis (African clawed frog).